The chain runs to 218 residues: Glutathione S-transferase Mu 4 (218 aa).

Positions 1–88 constitute a GST N-terminal domain; sequence MPMTLGYWDI…YIARKHNLCG (88 aa). Glutathione contacts are provided by residues 7-8, 46-50, 59-60, and 72-73; these read YW, WLSEK, NL, and QS. Residues 90–208 form the GST C-terminal domain; sequence TEEEKIRVDI…KTSRFLRTPL (119 aa). Tyr-116 serves as a coordination point for substrate.

This sequence belongs to the GST superfamily. Mu family. As to quaternary structure, homodimer.

The protein resides in the cytoplasm. The enzyme catalyses RX + glutathione = an S-substituted glutathione + a halide anion + H(+). It catalyses the reaction 1-chloro-2,4-dinitrobenzene + glutathione = 2,4-dinitrophenyl-S-glutathione + chloride + H(+). It carries out the reaction (13S,14S)-epoxy-(4Z,7Z,9E,11E,16Z,19Z)-docosahexaenoate + glutathione = (13R)-S-glutathionyl-(14S)-hydroxy-(4Z,7Z,9E,11E,16Z,19Z)-docosahexaenoate. The catalysed reaction is leukotriene C4 = leukotriene A4 + glutathione. Conjugation of reduced glutathione to a wide number of exogenous and endogenous hydrophobic electrophiles. Catalyzes the conjugation of leukotriene A4 with reduced glutathione (GSH) to form leukotriene C4. Can also catalyze the transfer of a glutathionyl group from glutathione (GSH) to 13(S),14(S)-epoxy-docosahexaenoic acid to form maresin conjugate in tissue regeneration 1 (MCTR1), a bioactive lipid mediator that possess potent anti-inflammatory and proresolving actions. The protein is Glutathione S-transferase Mu 4 (Gstm4) of Rattus norvegicus (Rat).